A 1947-amino-acid polypeptide reads, in one-letter code: Sodium channel protein type 3 subunit alpha (1947 aa).

Over 1-128 the chain is Cytoplasmic; the sequence is MAQALLVPPG…KIAIKILVHS (128 aa). A disordered region spans residues 28-60; that stretch reads RAAEEKAKKPKKEQDIDDENKPKPNSDLEAGKN. Basic and acidic residues predominate over residues 46–57; that stretch reads ENKPKPNSDLEA. One copy of the I repeat lies at 110–455; sequence ILTPLNPVRK…QQMLEQLKKQ (346 aa). Residues 129–146 form a helical membrane-spanning segment; it reads LFSMLIMCTILTNCVFMT. The Extracellular segment spans residues 147-152; that stretch reads LSNPPD. A helical membrane pass occupies residues 153–174; the sequence is WTKNVEYTFTGIYTFESLIKIL. The Cytoplasmic portion of the chain corresponds to 175–188; that stretch reads ARGFCLEDFTFLRD. The chain crosses the membrane as a helical span at residues 189–206; the sequence is PWNWLDFSVIVMAYVTEF. Residues 207 to 213 are Extracellular-facing; the sequence is VDLGNVS. An N-linked (GlcNAc...) asparagine glycan is attached at N211. A helical membrane pass occupies residues 214–235; it reads ALRTFRVLRALKTISVIPGLKT. Topologically, residues 236-249 are cytoplasmic; it reads IVGALIQSVKKLSD. A helical membrane pass occupies residues 250–269; it reads VMILTVFCLSVFALIGLQLF. Residues 270 to 369 are Extracellular-facing; it reads MGNLRNKCLQ…NYGYTSFDTF (100 aa). N-linked (GlcNAc...) asparagine glycosylation is found at N290, N296, N302, N307, and N339. The segment at residues 370 to 386 is an intramembrane region (pore-forming); sequence SWAFLSLFRLMTQDYWE. At 387 to 397 the chain is on the extracellular side; the sequence is NLYQLTLRAAG. A helical transmembrane segment spans residues 398-424; it reads KTYMIFFVLVIFLGSFYLVNLILAVVA. Residues 425-712 are Cytoplasmic-facing; sequence MAYEEQNQAT…LVNLIVMDPF (288 aa). S484, S485, and S486 each carry phosphoserine. Disordered regions lie at residues 493–529 and 587–632; these read SKSAKEWRNRRKKRRQREHLEGNHRPEGDRFPKSESE and VGSE…ETEV. Residues 500-509 show a composition bias toward basic residues; it reads RNRRKKRRQR. Composition is skewed to basic and acidic residues over residues 510–529 and 596–622; these read EHLEGNHRPEGDRFPKSESE and DEHSTFEDSESRRDSLFVPHRPGERRN. An II repeat occupies 693–965; sequence CCDSWLKVKH…QIAVGRMQKG (273 aa). A helical membrane pass occupies residues 713–730; that stretch reads VDLAITICIVLNTLFMAM. The Extracellular portion of the chain corresponds to 731 to 738; that stretch reads EHYPMTEQ. Residues 739–763 form a helical membrane-spanning segment; it reads FSSVLTVGNLVFTGIFTAEMVLKII. Residues 764-773 lie on the Cytoplasmic side of the membrane; the sequence is AMDPYYYFQE. Residues 774–793 form a helical membrane-spanning segment; sequence GWNIFDGIIVSLSLMELGLA. Topologically, residues 794-797 are extracellular; that stretch reads NVEG. The helical transmembrane segment at 798 to 816 threads the bilayer; the sequence is LSVLRSFRLLRVFKLAKSW. Over 817-834 the chain is Cytoplasmic; that stretch reads PTLNMLIKIIGNSVGALG. Residues 835–855 form a helical membrane-spanning segment; the sequence is NLTLVLAIIVFIFAVVGMQLF. Residues 856-880 lie on the Extracellular side of the membrane; sequence GKSYKECVCKINEDCKLPRWHMNDF. A disulfide bond links C864 and C870. The segment at residues 881 to 896 is an intramembrane region (pore-forming); sequence FHSFLIVFRVLCGEWI. Topologically, residues 897–907 are extracellular; the sequence is ETMWDCMEVAG. C902 and C911 are joined by a disulfide. A helical transmembrane segment spans residues 908–934; it reads QTMCLIVFMLVMVIGNLVVLNLFLALL. Residues 935–1157 are Cytoplasmic-facing; sequence LSSFSSDNLA…RKTCYSIVEH (223 aa). The tract at residues 1070 to 1113 is disordered; sequence EEFSSESELEESKEKLNATSSSEGSTVDVAPPREGEQAEIEPEE. An III repeat occupies 1140–1451; the sequence is KGKIWWNLRK…KKYYNAMKKL (312 aa). The chain crosses the membrane as a helical span at residues 1158–1178; sequence NWFETFIVFMILLSSGALAFE. Residues 1179 to 1190 are Extracellular-facing; it reads DIYIEQRKTIKT. A helical membrane pass occupies residues 1191–1212; the sequence is MLEYADKVFTYIFILEMLLKWV. Residues 1213–1218 are Cytoplasmic-facing; that stretch reads AYGFQT. Residues 1219-1244 form a helical membrane-spanning segment; sequence YFTNAWCWLDFLIVDVSLVSLVANAL. Residues 1245-1253 are Extracellular-facing; the sequence is GYSELGAIK. A helical membrane pass occupies residues 1254–1272; that stretch reads SLRTLRALRPLRALSRFEG. Over 1273 to 1285 the chain is Cytoplasmic; the sequence is MRVVVNALVGAIP. The chain crosses the membrane as a helical span at residues 1286–1308; that stretch reads SIMNVLLVCLIFWLIFSIMGVNL. Residues 1309–1354 lie on the Extracellular side of the membrane; it reads FAGKFYHCVNMTTGSMFDMSEVNNFSDCQALGKQARWKNVKVNFDN. C1316 and C1336 form a disulfide bridge. N1318 and N1332 each carry an N-linked (GlcNAc...) asparagine glycan. Positions 1355 to 1371 form an intramembrane region, pore-forming; that stretch reads VGAGYLALLQVATFKGW. The Extracellular portion of the chain corresponds to 1372 to 1394; the sequence is MDIMYAAVDSRDVKLQPVYEENL. The helical transmembrane segment at 1395–1420 threads the bilayer; sequence YMYLYFVIFIIFGSFFTLNLFIGVII. Over 1421 to 1478 the chain is Cytoplasmic; it reads DNFNQQKKKFGGQDIFMTEEQKKYYNAMKKLGSKKPQKPIPRPANKFQGMVFDFVTRQ. S1453 carries the phosphoserine modification. Residues 1460–1758 form an IV repeat; the sequence is IPRPANKFQG…WEKFDPDATQ (299 aa). The helical transmembrane segment at 1479-1497 threads the bilayer; that stretch reads VFDISIMILICLNMVTMMV. The Extracellular segment spans residues 1498–1505; sequence ETDDQSKY. Residues 1506 to 1529 form a helical membrane-spanning segment; sequence MTLVLSRINLVFIVLFTGEFLLKL. At 1530–1539 the chain is on the cytoplasmic side; that stretch reads ISLRYYYFTI. Residues 1540–1557 traverse the membrane as a helical segment; sequence GWNIFDFVVVILSIVGMF. Residues 1558–1569 lie on the Extracellular side of the membrane; it reads LAELIEKYFVSP. A helical membrane pass occupies residues 1570–1592; it reads TLFRVIRLARIGRILRLIKGAKG. The Cytoplasmic portion of the chain corresponds to 1593–1605; sequence IRTLLFALMMSLP. A helical transmembrane segment spans residues 1606-1629; it reads ALFNIGLLLFLVMFIYAIFGMSNF. Topologically, residues 1630-1651 are extracellular; sequence AYVKKEAGIDDMFNFETFGNSM. An intramembrane region (pore-forming) is located at residues 1652–1664; it reads ICLFQITTSAGWD. Over 1665 to 1696 the chain is Extracellular; the sequence is GLLAPILNSAPPDCDPDAIHPGSSVKGDCGNP. A helical membrane pass occupies residues 1697-1722; it reads SVGIFFFVSYIIISFLVVVNMYIAVI. The Cytoplasmic portion of the chain corresponds to 1723 to 1947; that stretch reads LENFSVATEE…PEKESKGKEV (225 aa). The IQ domain maps to 1852-1881; that stretch reads EEVSAAIIQRNYRCYLLKQRLKNISNTYDK. A disordered region spans residues 1901–1947; that stretch reads LNGNSTPEKTDGSSSTTSPPSYDSVTKPDKEKFEKDKPEKESKGKEV. The segment covering 1926–1947 has biased composition (basic and acidic residues); the sequence is TKPDKEKFEKDKPEKESKGKEV.

It belongs to the sodium channel (TC 1.A.1.10) family. Nav1.3/SCN3A subfamily. In terms of assembly, heterooligomer of an alpha subunit, SCN3A, and 1 to 3 regulatory beta subunits including SCN1B and SCN2B; disulfide-linked with some beta subunits like SCN2B. Interacts with NEDD4L; could regulate expression of SCN3A at the plasma membrane through ubiquitination-regulated endocytosis. Post-translationally, may be ubiquitinated by NEDD4L; which would promote its endocytosis. Phosphorylation at Ser-1453 in a highly conserved cytoplasmic loop slows inactivation of the channel and reduces peak sodium currents. As to expression, expressed in enterochromaffin cells in both colon and small bowel (at protein level). Expressed in pancreatic alpha and beta cells.

It localises to the cell membrane. It is found in the basal cell membrane. It catalyses the reaction Na(+)(in) = Na(+)(out). Its function is as follows. Pore-forming subunit of Nav1.3, a voltage-gated sodium (Nav) channel that directly mediates the depolarizing phase of action potentials in excitable membranes. Navs, also called VGSCs (voltage-gated sodium channels) or VDSCs (voltage-dependent sodium channels), operate by switching between closed and open conformations depending on the voltage difference across the membrane. In the open conformation they allow Na(+) ions to selectively pass through the pore, along their electrochemical gradient. The influx of Na+ ions provokes membrane depolarization, initiating the propagation of electrical signals throughout cells and tissues. In some secretory cell types, it also participates in cell excitability through membrane depolarization and regulates cells responsiveness to stimuli triggering secretion. For instance, it controls the release of serotonin/5-hydroxytryptamine by enterochromaffin cells and is required for both glucagon- and glucose-induced insulin secretion in pancreatic endocrine cells. The sequence is that of Sodium channel protein type 3 subunit alpha from Mus musculus (Mouse).